The chain runs to 190 residues: dCTP deaminase, dUMP-forming (190 aa).

DCTP contacts are provided by residues 101 to 106 (KSSLGR), Asp119, 127 to 129 (TLE), Gln148, Tyr162, and Gln174. Glu129 acts as the Proton donor/acceptor in catalysis. Residues 163–190 (GSTRVGSKYQGQRGPTPSRSYQNFITST) form a disordered region. Over residues 171–190 (YQGQRGPTPSRSYQNFITST) the composition is skewed to polar residues.

Belongs to the dCTP deaminase family. As to quaternary structure, homotrimer.

The catalysed reaction is dCTP + 2 H2O = dUMP + NH4(+) + diphosphate. Its pathway is pyrimidine metabolism; dUMP biosynthesis; dUMP from dCTP: step 1/1. Its function is as follows. Bifunctional enzyme that catalyzes both the deamination of dCTP to dUTP and the hydrolysis of dUTP to dUMP without releasing the toxic dUTP intermediate. The protein is dCTP deaminase, dUMP-forming of Mycobacterium avium (strain 104).